Here is a 179-residue protein sequence, read N- to C-terminus: ATP synthase subunit delta (179 aa).

It belongs to the ATPase delta chain family. In terms of assembly, F-type ATPases have 2 components, F(1) - the catalytic core - and F(0) - the membrane proton channel. F(1) has five subunits: alpha(3), beta(3), gamma(1), delta(1), epsilon(1). F(0) has three main subunits: a(1), b(2) and c(10-14). The alpha and beta chains form an alternating ring which encloses part of the gamma chain. F(1) is attached to F(0) by a central stalk formed by the gamma and epsilon chains, while a peripheral stalk is formed by the delta and b chains.

Its subcellular location is the cell inner membrane. Its function is as follows. F(1)F(0) ATP synthase produces ATP from ADP in the presence of a proton or sodium gradient. F-type ATPases consist of two structural domains, F(1) containing the extramembraneous catalytic core and F(0) containing the membrane proton channel, linked together by a central stalk and a peripheral stalk. During catalysis, ATP synthesis in the catalytic domain of F(1) is coupled via a rotary mechanism of the central stalk subunits to proton translocation. This protein is part of the stalk that links CF(0) to CF(1). It either transmits conformational changes from CF(0) to CF(1) or is implicated in proton conduction. This is ATP synthase subunit delta from Paraburkholderia phymatum (strain DSM 17167 / CIP 108236 / LMG 21445 / STM815) (Burkholderia phymatum).